A 257-amino-acid polypeptide reads, in one-letter code: Serine/arginine-rich splicing factor 1 (257 aa).

S2 bears the N-acetylserine mark. The 76-residue stretch at 16–91 (CRIYVGNLPP…YRLRVEFPRS (76 aa)) folds into the RRM 1 domain. A disordered region spans residues 88–116 (FPRSGRGTGRGGGGGGGGGAPRGRYGPPS). Over residues 93 to 108 (RGTGRGGGGGGGGGAP) the composition is skewed to gly residues. The RRM 2 domain maps to 121–195 (YRVIVSGLPP…ETAYIRVKVD (75 aa)).

Its subcellular location is the cytoplasm. It is found in the nucleus speckle. In terms of biological role, may play a role in preventing exon skipping, ensuring the accuracy of splicing and regulating alternative splicing. This Gallus gallus (Chicken) protein is Serine/arginine-rich splicing factor 1 (SRSF1).